The chain runs to 160 residues: Cytochrome c-type biogenesis protein CcmE (160 aa).

Topologically, residues 1-8 (MNPRRKNR) are cytoplasmic. A helical; Signal-anchor for type II membrane protein membrane pass occupies residues 9-29 (LILVMLVLVGLGLATALVMYA). Topologically, residues 30–160 (LRSNIDLFYT…AVGDNSVRPS (131 aa)) are periplasmic. 2 residues coordinate heme: His-130 and Tyr-134. A compositionally biased stretch (basic and acidic residues) spans 133–148 (KYTPPEIEDAMKKDHP). A disordered region spans residues 133 to 160 (KYTPPEIEDAMKKDHPAQAVGDNSVRPS).

It belongs to the CcmE/CycJ family.

The protein resides in the cell inner membrane. Its function is as follows. Heme chaperone required for the biogenesis of c-type cytochromes. Transiently binds heme delivered by CcmC and transfers the heme to apo-cytochromes in a process facilitated by CcmF and CcmH. In Erwinia tasmaniensis (strain DSM 17950 / CFBP 7177 / CIP 109463 / NCPPB 4357 / Et1/99), this protein is Cytochrome c-type biogenesis protein CcmE.